Reading from the N-terminus, the 215-residue chain is Outer-membrane lipoprotein LolB (215 aa).

The first 21 residues, 1–21 (MLIPKKYYLLIILLSNCLLAS), serve as a signal peptide directing secretion. The N-palmitoyl cysteine moiety is linked to residue Cys-22. The S-diacylglycerol cysteine moiety is linked to residue Cys-22.

It belongs to the LolB family. Monomer.

It localises to the cell outer membrane. Functionally, plays a critical role in the incorporation of lipoproteins in the outer membrane after they are released by the LolA protein. The polypeptide is Outer-membrane lipoprotein LolB (Baumannia cicadellinicola subsp. Homalodisca coagulata).